A 72-amino-acid chain; its full sequence is MAAKMKKGALVRAVKETLENSLEAQASDSRFPSYLFDSKGEILDLTDEYALVRFYVPTPSVWLRLDQLELAE.

This sequence belongs to the complex I NdhO subunit family. As to quaternary structure, NDH-1 can be composed of about 15 different subunits; different subcomplexes with different compositions have been identified which probably have different functions.

Its subcellular location is the cellular thylakoid membrane. It carries out the reaction a plastoquinone + NADH + (n+1) H(+)(in) = a plastoquinol + NAD(+) + n H(+)(out). The catalysed reaction is a plastoquinone + NADPH + (n+1) H(+)(in) = a plastoquinol + NADP(+) + n H(+)(out). Its function is as follows. NDH-1 shuttles electrons from an unknown electron donor, via FMN and iron-sulfur (Fe-S) centers, to quinones in the respiratory and/or the photosynthetic chain. The immediate electron acceptor for the enzyme in this species is believed to be plastoquinone. Couples the redox reaction to proton translocation, and thus conserves the redox energy in a proton gradient. Cyanobacterial NDH-1 also plays a role in inorganic carbon-concentration. The polypeptide is NAD(P)H-quinone oxidoreductase subunit O (Rippkaea orientalis (strain PCC 8801 / RF-1) (Cyanothece sp. (strain PCC 8801))).